The primary structure comprises 291 residues: GTPase Era (291 aa).

Positions 2 to 167 (KSGFVSIIGR…LDEIVKYLDE (166 aa)) constitute an Era-type G domain. A G1 region spans residues 10–17 (GRTNAGKS). Residue 10–17 (GRTNAGKS) coordinates GTP. The tract at residues 36–40 (NATRR) is G2. A G3 region spans residues 57–60 (DTPG). Residues 57–61 (DTPGL) and 116–119 (NKVD) contribute to the GTP site. The interval 116-119 (NKVD) is G4. A G5 region spans residues 146–148 (YSS). One can recognise a KH type-2 domain in the interval 186–274 (YRDFILESIY…LLKLFVTVKK (89 aa)).

It belongs to the TRAFAC class TrmE-Era-EngA-EngB-Septin-like GTPase superfamily. Era GTPase family. As to quaternary structure, monomer.

The protein resides in the cytoplasm. It localises to the cell inner membrane. In terms of biological role, an essential GTPase that binds both GDP and GTP, with rapid nucleotide exchange. Plays a role in 16S rRNA processing and 30S ribosomal subunit biogenesis and possibly also in cell cycle regulation and energy metabolism. This Campylobacter jejuni subsp. jejuni serotype O:23/36 (strain 81-176) protein is GTPase Era.